Reading from the N-terminus, the 124-residue chain is Fluoride-specific ion channel FluC (124 aa).

Transmembrane regions (helical) follow at residues 4–24 (VLYI…ISIL), 35–55 (FGTL…YALA), 60–80 (IGPE…TTFS), and 100–120 (LNVL…QQLI). 2 residues coordinate Na(+): glycine 74 and threonine 77.

It belongs to the fluoride channel Fluc/FEX (TC 1.A.43) family.

The protein localises to the cell inner membrane. The catalysed reaction is fluoride(in) = fluoride(out). With respect to regulation, na(+) is not transported, but it plays an essential structural role and its presence is essential for fluoride channel function. Functionally, fluoride-specific ion channel. Important for reducing fluoride concentration in the cell, thus reducing its toxicity. The polypeptide is Fluoride-specific ion channel FluC (Shewanella amazonensis (strain ATCC BAA-1098 / SB2B)).